A 741-amino-acid polypeptide reads, in one-letter code: NAD(P)H-quinone oxidoreductase subunit 5, chloroplastic (741 aa).

Helical transmembrane passes span 9 to 29, 40 to 60, 89 to 109, 125 to 145, 147 to 167, 185 to 205, 219 to 239, 258 to 278, 283 to 303, 327 to 347, 354 to 374, 396 to 416, 425 to 445, 549 to 569, 605 to 625, and 721 to 741; these read WIIP…LLLF, WAFQ…NLSI, IDPL…LVLI, FAYM…SNLI, IYIF…FWFT, GDFG…SFEF, NEVN…GAIA, TPIS…FLVA, LFIV…ITVF, LGYM…FHLI, ALLF…VGYC, NSFL…CFWS, WLYS…TAFY, LFPI…GIHF, VFSV…YKPV, and YLFF…FVNL.

This sequence belongs to the complex I subunit 5 family. In terms of assembly, NDH is composed of at least 16 different subunits, 5 of which are encoded in the nucleus.

Its subcellular location is the plastid. The protein localises to the chloroplast thylakoid membrane. It carries out the reaction a plastoquinone + NADH + (n+1) H(+)(in) = a plastoquinol + NAD(+) + n H(+)(out). The catalysed reaction is a plastoquinone + NADPH + (n+1) H(+)(in) = a plastoquinol + NADP(+) + n H(+)(out). In terms of biological role, NDH shuttles electrons from NAD(P)H:plastoquinone, via FMN and iron-sulfur (Fe-S) centers, to quinones in the photosynthetic chain and possibly in a chloroplast respiratory chain. The immediate electron acceptor for the enzyme in this species is believed to be plastoquinone. Couples the redox reaction to proton translocation, and thus conserves the redox energy in a proton gradient. In Pentatrichia integra (Rock-climbing daisy), this protein is NAD(P)H-quinone oxidoreductase subunit 5, chloroplastic (ndhF).